A 265-amino-acid chain; its full sequence is 5'-nucleotidase SurE (265 aa).

Asp-11, Asp-12, Ser-43, and Asn-101 together coordinate a divalent metal cation.

This sequence belongs to the SurE nucleotidase family. A divalent metal cation is required as a cofactor.

Its subcellular location is the cytoplasm. It carries out the reaction a ribonucleoside 5'-phosphate + H2O = a ribonucleoside + phosphate. In terms of biological role, nucleotidase that shows phosphatase activity on nucleoside 5'-monophosphates. This chain is 5'-nucleotidase SurE, found in Synechococcus sp. (strain CC9311).